Here is a 180-residue protein sequence, read N- to C-terminus: Inner membrane-spanning protein YciB (180 aa).

Transmembrane regions (helical) follow at residues 4–24, 25–45, 49–69, 76–96, 118–138, and 150–170; these read LLSE…GGGI, QSAT…CYII, VSKL…ITLI, IKIK…MSGI, IILS…NEVV, and FKVF…LPLL.

The protein belongs to the YciB family.

It localises to the cell inner membrane. Functionally, plays a role in cell envelope biogenesis, maintenance of cell envelope integrity and membrane homeostasis. This is Inner membrane-spanning protein YciB from Rickettsia typhi (strain ATCC VR-144 / Wilmington).